The following is a 615-amino-acid chain: uncharacterized protein (615 aa).

Phosphoserine is present on S48. The span at D424–S433 shows a compositional bias: acidic residues. A disordered region spans residues D424–V615. 4 stretches are compositionally biased toward basic and acidic residues: residues D439–G476, D484–A496, E504–A521, and E529–K561. Composition is skewed to basic residues over residues K579–K589 and Y606–V615.

This is an uncharacterized protein from Arabidopsis thaliana (Mouse-ear cress).